Consider the following 201-residue polypeptide: Chromophore lyase CpcT/CpeT (201 aa).

This sequence belongs to the CpcT/CpeT biliprotein lyase family.

Its subcellular location is the plastid. It localises to the organellar chromatophore. Functionally, covalently attaches a chromophore to Cys residue(s) of phycobiliproteins. This is Chromophore lyase CpcT/CpeT from Paulinella chromatophora.